We begin with the raw amino-acid sequence, 125 residues long: MIYRLKKNFEFTIVYKRGKSFANELLVMYILKNRRNKDRDFLAYSKVGISVSKKVGNSVVRSRCKRLITESFRLNYNYIVKGYDFVFIARNPLQSKSYFEVERAMRSLIKKAGLYNNEEITNTPN.

Belongs to the RnpA family. Consists of a catalytic RNA component (M1 or rnpB) and a protein subunit.

The enzyme catalyses Endonucleolytic cleavage of RNA, removing 5'-extranucleotides from tRNA precursor.. Functionally, RNaseP catalyzes the removal of the 5'-leader sequence from pre-tRNA to produce the mature 5'-terminus. It can also cleave other RNA substrates such as 4.5S RNA. The protein component plays an auxiliary but essential role in vivo by binding to the 5'-leader sequence and broadening the substrate specificity of the ribozyme. This chain is Ribonuclease P protein component, found in Clostridium beijerinckii (strain ATCC 51743 / NCIMB 8052) (Clostridium acetobutylicum).